The sequence spans 500 residues: Oogenesin-3 (500 aa).

The LRR 1; degenerate repeat unit spans residues 116-143 (RCKLRVLKWRDEQHDFCGIWPGSHEAED). The LRR 2; degenerate repeat unit spans residues 198–222 (HLLCRKLVIETLTKDTVIEIFKIVN). The stretch at 223–248 (ADCIQELELYSLCLEDLAFLNPYLRQ) is one LRR 3; degenerate repeat. One copy of the LRR 4; degenerate repeat lies at 249-285 (MDNLLELTLDHVTDSLSMGDSEMCEEEMITLVSQLPT). 5 LRR repeats span residues 286–311 (FPCL…LRCL), 312–343 (KKPL…FELK), 344–367 (CLYL…LESV), 368–395 (RHTL…ALSQ), and 396–420 (CSHL…LLQH).

Belongs to the PRAME family. Expressed in ovary, specifically in oocytes. Detected in follicles with two layers of granulosa cells, and are present in early as well as large antral follicles.

This Mus musculus (Mouse) protein is Oogenesin-3.